The sequence spans 138 residues: ATP synthase epsilon chain (138 aa).

It belongs to the ATPase epsilon chain family. In terms of assembly, F-type ATPases have 2 components, CF(1) - the catalytic core - and CF(0) - the membrane proton channel. CF(1) has five subunits: alpha(3), beta(3), gamma(1), delta(1), epsilon(1). CF(0) has three main subunits: a, b and c.

Its subcellular location is the cell membrane. In terms of biological role, produces ATP from ADP in the presence of a proton gradient across the membrane. This Buchnera aphidicola subsp. Schizaphis graminum (strain Sg) protein is ATP synthase epsilon chain (atpC).